Here is a 458-residue protein sequence, read N- to C-terminus: UPF0210 protein Maeo_1412 (458 aa).

Belongs to the UPF0210 family.

The polypeptide is UPF0210 protein Maeo_1412 (Methanococcus aeolicus (strain ATCC BAA-1280 / DSM 17508 / OCM 812 / Nankai-3)).